Here is a 443-residue protein sequence, read N- to C-terminus: Putative type II methyltransferase M.BsuMIIP (443 aa).

Positions 4–440 (LRVMSLFSGI…QELIHTYVNK (437 aa)) constitute an SAM-dependent MTase C5-type domain. Residue Cys-78 is part of the active site.

It belongs to the class I-like SAM-binding methyltransferase superfamily. C5-methyltransferase family.

The catalysed reaction is a 2'-deoxycytidine in DNA + S-adenosyl-L-methionine = a 5-methyl-2'-deoxycytidine in DNA + S-adenosyl-L-homocysteine + H(+). A putative methylase, recognizes the double-stranded sequence 5'-GGCC-3', methylates C-?. There is no known cognate restriction enzyme. This is Putative type II methyltransferase M.BsuMIIP (mtbP) from Bacillus subtilis (strain 168).